The primary structure comprises 322 residues: MIFSTVEHILTHISFSIVSIIITMRLISFFLVDGIVQLYDSSEKGMIVTFLCLTGLLVTRWTYSGHFPLSNLYESLIFLSWSFSLIHIVPYFKKNKKYLSTITGSSVVFTQGFTTSGLLTEIDQSSILVPALQSEWLIMHVTMMILGYASLLCGSLLSIALLVITFRKNKKILYRNNLLLNESFFFVEIEYMNERSNLLQNTSFFSAKNYYRSQLIQQLDYWSSRGISLGFIFLTIGILSGAVWANEAWGSYWNWDPKETWAFITWIIFAIYLHTRTTRNPKCANSAIVASIGFLIIWICYFGVNLLGIGLHSYGSFTLLAN.

A run of 8 helical transmembrane segments spans residues 15-35 (FSIV…VDGI), 45-65 (GMIV…TYSG), 72-92 (LYES…VPYF), 98-120 (YLST…GLLT), 144-164 (MILG…LLVI), 226-246 (GISL…VWAN), 253-273 (WNWD…AIYL), and 287-307 (AIVA…VNLL).

The protein belongs to the CcmF/CycK/Ccl1/NrfE/CcsA family. May interact with Ccs1.

It is found in the plastid. The protein localises to the chloroplast thylakoid membrane. Its function is as follows. Required during biogenesis of c-type cytochromes (cytochrome c6 and cytochrome f) at the step of heme attachment. This is Cytochrome c biogenesis protein CcsA from Coffea arabica (Arabian coffee).